The following is a 582-amino-acid chain: V-type ATP synthase alpha chain (582 aa).

Position 231 to 238 (231 to 238 (GPFGSGKT)) interacts with ATP.

The protein belongs to the ATPase alpha/beta chains family.

The enzyme catalyses ATP + H2O + 4 H(+)(in) = ADP + phosphate + 5 H(+)(out). In terms of biological role, produces ATP from ADP in the presence of a proton gradient across the membrane. The V-type alpha chain is a catalytic subunit. This Deinococcus deserti (strain DSM 17065 / CIP 109153 / LMG 22923 / VCD115) protein is V-type ATP synthase alpha chain.